The primary structure comprises 1793 residues: Non-reducing polyketide synthase adaA (1793 aa).

Residues asparagine 16 to tyrosine 250 are N-terminal acylcarrier protein transacylase domain (SAT). One can recognise a Ketosynthase family 3 (KS3) domain in the interval aspartate 388 to aspartate 821. Catalysis depends on for beta-ketoacyl synthase activity residues cysteine 561, histidine 696, and histidine 739. Residues valine 923 to glycine 1245 are malonyl-CoA:ACP transacylase (MAT) domain. The tract at residues threonine 1312–proline 1634 is product template (PT) domain. Residues histidine 1316 to threonine 1452 are N-terminal hotdog fold. A PKS/mFAS DH domain is found at histidine 1316 to aspartate 1629. Histidine 1348 functions as the Proton acceptor; for dehydratase activity in the catalytic mechanism. Positions lysine 1482–aspartate 1629 are C-terminal hotdog fold. Aspartate 1540 functions as the Proton donor; for dehydratase activity in the catalytic mechanism. Residues alanine 1642–proline 1659 show a composition bias toward low complexity. The segment at alanine 1642–aspartate 1714 is disordered. Residues threonine 1660 to asparagine 1681 are compositionally biased toward polar residues. Over residues alanine 1683–threonine 1706 the composition is skewed to low complexity. The Carrier domain maps to serine 1716–cysteine 1793. Serine 1753 is subject to O-(pantetheine 4'-phosphoryl)serine.

Pantetheine 4'-phosphate is required as a cofactor.

The catalysed reaction is holo-[ACP] + 9 malonyl-CoA + acetyl-CoA + 9 H(+) = 3-(2,4-dioxopentyl)-3,6,8,9-tetrahydroxy-1-oxo-1,2,3,4-tetrahydroanthracene-2-carboxyl-[ACP] + 9 CO2 + 10 CoA + 2 H2O. The protein operates within secondary metabolite biosynthesis. In terms of biological role, non-reducing polyketide synthase; part of the gene cluster that mediates the biosynthesis of the linear tetracyclic TAN-1612 neuropeptide Y receptor antagonist. The decaketide backbone of TAN-1612 is synthesized by the non-reducing polyketide synthase adaA via condensation of one acetyl-CoA starter unit with 9 malonyl-CoA units. The FAD-dependent monooxygenase adaC then performs hydroxylation at C2 while the polaketide chain is still attached to the NRPKS adaA. The alpha-hydroxylation step at C2 appears to be crucial for the following C18-C1 Claisen cyclization and release of the C9-hydroxyl version of TAN-1612 from the NRPKS adaA, two steps performed by the lactamase-like protein adaB. Finally, the O-methyltransferase adaD performs the C9 O-methylation to complete the biosynthesis of TAN-1612. The sequence is that of Non-reducing polyketide synthase adaA from Aspergillus niger (strain ATCC MYA-4892 / CBS 513.88 / FGSC A1513).